The following is an 89-amino-acid chain: Translation initiation factor IF-1, chloroplastic (89 aa).

The region spanning 1–73 (MKEKEAKWVV…TKGRIIYRLP (73 aa)) is the S1-like domain.

It belongs to the IF-1 family. As to quaternary structure, component of the 30S ribosomal translation pre-initiation complex which assembles on the 30S ribosome in the order IF-2 and IF-3, IF-1 and N-formylmethionyl-tRNA(fMet); mRNA recruitment can occur at any time during PIC assembly.

It localises to the plastid. Its subcellular location is the chloroplast. One of the essential components for the initiation of protein synthesis. Stabilizes the binding of IF-2 and IF-3 on the 30S subunit to which N-formylmethionyl-tRNA(fMet) subsequently binds. Helps modulate mRNA selection, yielding the 30S pre-initiation complex (PIC). Upon addition of the 50S ribosomal subunit IF-1, IF-2 and IF-3 are released leaving the mature 70S translation initiation complex. The polypeptide is Translation initiation factor IF-1, chloroplastic (Jasminum nudiflorum (Winter jasmine)).